The primary structure comprises 423 residues: Glucose-1-phosphate adenylyltransferase (423 aa).

Alpha-D-glucose 1-phosphate is bound by residues tyrosine 108, glycine 173, 188–189 (EK), and serine 207.

Belongs to the bacterial/plant glucose-1-phosphate adenylyltransferase family. As to quaternary structure, homotetramer.

The enzyme catalyses alpha-D-glucose 1-phosphate + ATP + H(+) = ADP-alpha-D-glucose + diphosphate. It functions in the pathway glycan biosynthesis; glycogen biosynthesis. Involved in the biosynthesis of ADP-glucose, a building block required for the elongation reactions to produce glycogen. Catalyzes the reaction between ATP and alpha-D-glucose 1-phosphate (G1P) to produce pyrophosphate and ADP-Glc. This Francisella tularensis subsp. mediasiatica (strain FSC147) protein is Glucose-1-phosphate adenylyltransferase.